The following is an 85-amino-acid chain: UPF0297 protein CD630_12830 (85 aa).

It belongs to the UPF0297 family.

The polypeptide is UPF0297 protein CD630_12830 (Clostridioides difficile (strain 630) (Peptoclostridium difficile)).